The following is a 325-amino-acid chain: UPF0285 protein Mbar_A0208 (325 aa).

This sequence belongs to the UPF0285 family.

The sequence is that of UPF0285 protein Mbar_A0208 from Methanosarcina barkeri (strain Fusaro / DSM 804).